Consider the following 93-residue polypeptide: MAHKKGTGSTRNGRDSNAQRLGVKRFGGQAVIAGNILVRQRGTKFHAGNNVGIGKDDTLFALVDGVVTFERKGKSRKKVSVYPAAAAAEAVAG.

The protein belongs to the bacterial ribosomal protein bL27 family.

This Trichormus variabilis (strain ATCC 29413 / PCC 7937) (Anabaena variabilis) protein is Large ribosomal subunit protein bL27.